The sequence spans 433 residues: uncharacterized protein (433 aa).

A helical membrane pass occupies residues 36–58 (YYYYVQLAFKMLVGVLKNLPVVY). Positions 169–433 (VRVPSRDLQP…GEGRDLPEDN (265 aa)) are disordered. Composition is skewed to acidic residues over residues 216–227 (GEPGENGDESDE) and 234–254 (GDED…YESD). 3 stretches are compositionally biased toward basic and acidic residues: residues 265 to 280 (EPDR…RGSE), 354 to 364 (GGRRPARRDSP), and 422 to 433 (RRGEGRDLPEDN).

The protein localises to the host membrane. This is an uncharacterized protein from Psittacid herpesvirus 1 (isolate Amazon parrot/-/97-0001/1997) (PsHV-1).